The primary structure comprises 363 residues: 3-isopropylmalate dehydrogenase (363 aa).

Residue 78–91 participates in NAD(+) binding; sequence GPKWEHLPPAEQPE. The substrate site is built by arginine 99, arginine 109, arginine 138, and aspartate 227. Residues aspartate 227, aspartate 251, and aspartate 255 each coordinate Mg(2+). 285 to 297 provides a ligand contact to NAD(+); sequence GSAPDIAGKNIAN.

This sequence belongs to the isocitrate and isopropylmalate dehydrogenases family. LeuB type 1 subfamily. Homodimer. It depends on Mg(2+) as a cofactor. Requires Mn(2+) as cofactor.

The protein localises to the cytoplasm. It carries out the reaction (2R,3S)-3-isopropylmalate + NAD(+) = 4-methyl-2-oxopentanoate + CO2 + NADH. It functions in the pathway amino-acid biosynthesis; L-leucine biosynthesis; L-leucine from 3-methyl-2-oxobutanoate: step 3/4. Its function is as follows. Catalyzes the oxidation of 3-carboxy-2-hydroxy-4-methylpentanoate (3-isopropylmalate) to 3-carboxy-4-methyl-2-oxopentanoate. The product decarboxylates to 4-methyl-2 oxopentanoate. This is 3-isopropylmalate dehydrogenase from Yersinia pestis.